A 175-amino-acid chain; its full sequence is Small ribosomal subunit protein mS38 (175 aa).

Belongs to the mitochondrion-specific ribosomal protein mS38 family. As to quaternary structure, component of the mitochondrial small ribosomal subunit (mt-SSU). Mature yeast 74S mitochondrial ribosomes consist of a small (37S) and a large (54S) subunit. The 37S small subunit contains a 15S ribosomal RNA (15S mt-rRNA) and at least 32 different proteins. The 54S large subunit contains a 21S rRNA (21S mt-rRNA) and at least 45 different proteins.

It localises to the mitochondrion. The protein resides in the mitochondrion inner membrane. Component of the mitochondrial ribosome (mitoribosome), a dedicated translation machinery responsible for the synthesis of mitochondrial genome-encoded proteins, including at least some of the essential transmembrane subunits of the mitochondrial respiratory chain. The mitoribosomes are attached to the mitochondrial inner membrane and translation products are cotranslationally integrated into the membrane. mS38 is also involved in the splicing of the COX1 mRNA. The protein is Small ribosomal subunit protein mS38 (cox24) of Schizosaccharomyces pombe (strain 972 / ATCC 24843) (Fission yeast).